Consider the following 164-residue polypeptide: S-ribosylhomocysteine lyase (164 aa).

The Fe cation site is built by His-61, His-65, and Cys-131.

Belongs to the LuxS family. As to quaternary structure, homodimer. Fe cation serves as cofactor.

It catalyses the reaction S-(5-deoxy-D-ribos-5-yl)-L-homocysteine = (S)-4,5-dihydroxypentane-2,3-dione + L-homocysteine. Functionally, involved in the synthesis of autoinducer 2 (AI-2) which is secreted by bacteria and is used to communicate both the cell density and the metabolic potential of the environment. The regulation of gene expression in response to changes in cell density is called quorum sensing. Catalyzes the transformation of S-ribosylhomocysteine (RHC) to homocysteine (HC) and 4,5-dihydroxy-2,3-pentadione (DPD). This chain is S-ribosylhomocysteine lyase, found in Bifidobacterium longum (strain DJO10A).